The sequence spans 38 residues: Photosystem II reaction center protein L (38 aa).

The helical transmembrane segment at 17-37 threads the bilayer; the sequence is SLFWGLLLIFVLAVLFSSYFF.

The protein belongs to the PsbL family. As to quaternary structure, PSII is composed of 1 copy each of membrane proteins PsbA, PsbB, PsbC, PsbD, PsbE, PsbF, PsbH, PsbI, PsbJ, PsbK, PsbL, PsbM, PsbT, PsbX, PsbY, PsbZ, Psb30/Ycf12, at least 3 peripheral proteins of the oxygen-evolving complex and a large number of cofactors. It forms dimeric complexes.

It is found in the plastid. It localises to the chloroplast thylakoid membrane. Functionally, one of the components of the core complex of photosystem II (PSII). PSII is a light-driven water:plastoquinone oxidoreductase that uses light energy to abstract electrons from H(2)O, generating O(2) and a proton gradient subsequently used for ATP formation. It consists of a core antenna complex that captures photons, and an electron transfer chain that converts photonic excitation into a charge separation. This subunit is found at the monomer-monomer interface and is required for correct PSII assembly and/or dimerization. This is Photosystem II reaction center protein L from Zygnema circumcarinatum (Green alga).